The primary structure comprises 206 residues: Flavin reductase (NADPH) (206 aa).

Positions 10, 12, 13, 14, 15, 35, 38, and 39 each coordinate NADP(+). Ser-42 bears the Phosphoserine mark. 5 residues coordinate NADP(+): Asp-54, Val-55, Leu-75, Gly-76, and Arg-78. At Ser-82 the chain carries Phosphoserine. NADP(+) contacts are provided by Met-87, Cys-109, His-132, His-153, and Ile-154. Cys-109 functions as the S-nitroso-cysteine intermediate; for S-nitroso-CoA-dependent nitrosyltransferase activity in the catalytic mechanism. Residue Cys-188 is the S-nitroso-cysteine intermediate; for S-nitroso-CoA-dependent nitrosyltransferase activity of the active site.

Monomer. As to expression, at least expressed in the liver and erythrocyte.

It is found in the cytoplasm. It catalyses the reaction reduced riboflavin + NADP(+) = riboflavin + NADPH + 2 H(+). The catalysed reaction is bilirubin IXbeta + NADP(+) = biliverdin IXbeta + NADPH + H(+). The enzyme catalyses FMNH2 + NAD(+) = FMN + NADH + 2 H(+). It carries out the reaction FMNH2 + NADP(+) = FMN + NADPH + 2 H(+). It catalyses the reaction S-nitroso-CoA + L-cysteinyl-[protein] = S-nitroso-L-cysteinyl-[protein] + CoA. The catalysed reaction is L-cysteinyl-[SCAN] + S-nitroso-CoA = S-nitroso-L-cysteinyl-[SCAN] + CoA. The enzyme catalyses S-nitroso-L-cysteinyl-[SCAN] + L-cysteinyl-[protein] = L-cysteinyl-[SCAN] + S-nitroso-L-cysteinyl-[protein]. Enzyme that can both act as a NAD(P)H-dependent reductase and a S-nitroso-CoA-dependent nitrosyltransferase. Promotes fetal heme degradation during development. Also expressed in adult tissues, where it acts as a regulator of hematopoiesis, intermediary metabolism (glutaminolysis, glycolysis, TCA cycle and pentose phosphate pathway) and insulin signaling. Has a broad specificity oxidoreductase activity by catalyzing the NAD(P)H-dependent reduction of a variety of flavins, such as riboflavin, FAD or FMN, biliverdins, methemoglobin and PQQ (pyrroloquinoline quinone). Contributes to fetal heme catabolism by catalyzing reduction of biliverdin IXbeta into bilirubin IXbeta in the liver. Biliverdin IXbeta, which constitutes the major heme catabolite in the fetus is not present in adult. Does not reduce bilirubin IXalpha. Can also reduce the complexed Fe(3+) iron to Fe(2+) in the presence of FMN and NADPH. Acts as a protein nitrosyltransferase by catalyzing nitrosylation of cysteine residues of target proteins, such as HMOX2, INSR and IRS1. S-nitroso-CoA-dependent nitrosyltransferase activity is mediated via a 'ping-pong' mechanism: BLVRB first associates with both S-nitroso-CoA and protein substrate, nitric oxide group is then transferred from S-nitroso-CoA to Cys-109 and Cys-188 residues of BLVRB and from S-nitroso-BLVRB to the protein substrate. Inhibits insulin signaling by mediating nitrosylation of INSR and IRS1, leading to their inhibition. In Bos taurus (Bovine), this protein is Flavin reductase (NADPH) (BLVRB).